Reading from the N-terminus, the 982-residue chain is Ubiquitin carboxyl-terminal hydrolase 15 (982 aa).

Positions 7 to 118 (VDLETQRSEV…SQQPIARKVV (112 aa)) constitute a DUSP domain. The region spanning 288 to 933 (CGLSNLGNTC…AAYVLFYQRQ (646 aa)) is the USP domain. Cys297 functions as the Nucleophile in the catalytic mechanism. The disordered stretch occupies residues 623-695 (TEENDGSLHC…DNDSENGLCT (73 aa)). Residues 655-672 (METDEPDDESSQDQELPS) are compositionally biased toward acidic residues. The Proton acceptor role is filled by His891. The tract at residues 950-982 (QGASAATGAPHESDEESNEDENDIENENCMHTN) is disordered. Residues 962–975 (SDEESNEDENDIEN) are compositionally biased toward acidic residues.

The protein belongs to the peptidase C19 family.

The protein localises to the cytoplasm. It localises to the nucleus. It catalyses the reaction Thiol-dependent hydrolysis of ester, thioester, amide, peptide and isopeptide bonds formed by the C-terminal Gly of ubiquitin (a 76-residue protein attached to proteins as an intracellular targeting signal).. In terms of biological role, hydrolase that removes conjugated ubiquitin from target proteins and regulates various pathways such as the TGF-beta receptor signaling and NF-kappa-B pathways. Acts as a key regulator of TGF-beta receptor signaling pathway, but the precise mechanism is still unclear: according to a report, acts by promoting deubiquitination of monoubiquitinated R-SMADs, thereby alleviating inhibition of R-SMADs and promoting activation of TGF-beta target genes. According to another reports, regulates the TGF-beta receptor signaling pathway by mediating deubiquitination and stabilization of tgfbr1, leading to an enhanced TGF-beta signal. May also regulate gene expression and/or DNA repair through the deubiquitination of histone H2B. Involved in endosome organization by mediating deubiquitination of rnf26 target(s), releasing vesicles that are restrained in the perinuclear region. The protein is Ubiquitin carboxyl-terminal hydrolase 15 (usp15) of Xenopus tropicalis (Western clawed frog).